The sequence spans 145 residues: Ornithine decarboxylase antizyme (145 aa).

It belongs to the ODC antizyme family. In terms of assembly, interacts with ODC1 and thereby sterically blocks ODC homodimerization.

Its function is as follows. Ornithine decarboxylase (ODC) antizyme protein that negatively regulates ODC activity and intracellular polyamine biosynthesis and uptake in response to increased intracellular polyamine levels. Binds to ODC monomers, inhibiting the assembly of the functional ODC homodimer, and targets the monomers for ubiquitin-independent proteolytic destruction by the 26S proteasome. The sequence is that of Ornithine decarboxylase antizyme from Onchocerca volvulus.